A 734-amino-acid chain; its full sequence is Probable inactive histone-lysine N-methyltransferase SUVR1 (734 aa).

The segment at 61–163 is disordered; the sequence is QSTEKNKKEE…LPPLKRYVRR (103 aa). Basic and acidic residues predominate over residues 62–81; it reads STEKNKKEEEKKKKEEEKKS. Acidic residues predominate over residues 98–109; it reads VQDEEDDMDEDE. A compositionally biased stretch (basic residues) spans 113-122; it reads KRRLRSRRGR. The span at 123 to 132 shows a compositional bias: low complexity; that stretch reads ASSSSSSSSS. The Zn(2+) site is built by Cys-460, Cys-464, Cys-468, Cys-477, Cys-545, Cys-549, Cys-551, and Cys-555. One can recognise a Pre-SET domain in the interval 460 to 563; the sequence is CSTSCIEDCL…RCGNRVVQRG (104 aa). One can recognise an SET domain in the interval 566–696; sequence NKLQVFFTPN…AMEELAWDYG (131 aa). S-adenosyl-L-methionine-binding positions include 577–579 and 652–653; these read KGW and NH. Residue Cys-655 participates in Zn(2+) binding. Tyr-695 lines the S-adenosyl-L-methionine pocket. Residues 707–723 form the Post-SET domain; sequence KPFDCLCGSRFCRNKKR. Zn(2+) contacts are provided by Cys-711, Cys-713, and Cys-718.

It belongs to the class V-like SAM-binding methyltransferase superfamily. Histone-lysine methyltransferase family. As to quaternary structure, interacts with SUVR2 and itself.

The protein localises to the nucleus. It is found in the chromosome. Probable inactive histone-lysine methyltransferase that acts as regulator of transctiptional gene silencing independently of histone H3K9 methylation. Contributes to transcriptional gene silencing at RNA-directed DNA methylation (RdDM) target loci but also at RdDM-independent target loci. This is Probable inactive histone-lysine N-methyltransferase SUVR1 (SUVR1) from Arabidopsis thaliana (Mouse-ear cress).